Reading from the N-terminus, the 156-residue chain is Small ribosomal subunit protein uS7 (156 aa).

The protein belongs to the universal ribosomal protein uS7 family. Part of the 30S ribosomal subunit. Contacts proteins S9 and S11.

Functionally, one of the primary rRNA binding proteins, it binds directly to 16S rRNA where it nucleates assembly of the head domain of the 30S subunit. Is located at the subunit interface close to the decoding center, probably blocks exit of the E-site tRNA. This Methylibium petroleiphilum (strain ATCC BAA-1232 / LMG 22953 / PM1) protein is Small ribosomal subunit protein uS7.